A 374-amino-acid polypeptide reads, in one-letter code: UDP-N-acetylglucosamine--N-acetylmuramyl-(pentapeptide) pyrophosphoryl-undecaprenol N-acetylglucosamine transferase (374 aa).

Residues 13-15 (TGG), N124, R165, S193, and Q294 contribute to the UDP-N-acetyl-alpha-D-glucosamine site.

Belongs to the glycosyltransferase 28 family. MurG subfamily.

The protein resides in the cell inner membrane. It catalyses the reaction di-trans,octa-cis-undecaprenyl diphospho-N-acetyl-alpha-D-muramoyl-L-alanyl-D-glutamyl-meso-2,6-diaminopimeloyl-D-alanyl-D-alanine + UDP-N-acetyl-alpha-D-glucosamine = di-trans,octa-cis-undecaprenyl diphospho-[N-acetyl-alpha-D-glucosaminyl-(1-&gt;4)]-N-acetyl-alpha-D-muramoyl-L-alanyl-D-glutamyl-meso-2,6-diaminopimeloyl-D-alanyl-D-alanine + UDP + H(+). Its pathway is cell wall biogenesis; peptidoglycan biosynthesis. Its function is as follows. Cell wall formation. Catalyzes the transfer of a GlcNAc subunit on undecaprenyl-pyrophosphoryl-MurNAc-pentapeptide (lipid intermediate I) to form undecaprenyl-pyrophosphoryl-MurNAc-(pentapeptide)GlcNAc (lipid intermediate II). This chain is UDP-N-acetylglucosamine--N-acetylmuramyl-(pentapeptide) pyrophosphoryl-undecaprenol N-acetylglucosamine transferase, found in Rhizobium leguminosarum bv. trifolii (strain WSM2304).